A 472-amino-acid polypeptide reads, in one-letter code: Argininosuccinate lyase (472 aa).

Belongs to the lyase 1 family. Argininosuccinate lyase subfamily.

The protein localises to the cytoplasm. It catalyses the reaction 2-(N(omega)-L-arginino)succinate = fumarate + L-arginine. It functions in the pathway amino-acid biosynthesis; L-arginine biosynthesis; L-arginine from L-ornithine and carbamoyl phosphate: step 3/3. This is Argininosuccinate lyase from Syntrophus aciditrophicus (strain SB).